A 331-amino-acid chain; its full sequence is Homoserine O-succinyltransferase (331 aa).

Catalysis depends on Cys-141, which acts as the Acyl-thioester intermediate. Residues Lys-162 and Ser-190 each contribute to the substrate site. His-233 (proton acceptor) is an active-site residue. The active site involves Glu-235. Residue Arg-247 participates in substrate binding.

It belongs to the MetA family.

The protein resides in the cytoplasm. The enzyme catalyses L-homoserine + succinyl-CoA = O-succinyl-L-homoserine + CoA. Its pathway is amino-acid biosynthesis; L-methionine biosynthesis via de novo pathway; O-succinyl-L-homoserine from L-homoserine: step 1/1. In terms of biological role, transfers a succinyl group from succinyl-CoA to L-homoserine, forming succinyl-L-homoserine. In Methylorubrum extorquens (strain DSM 6343 / CIP 106787 / DM4) (Methylobacterium extorquens), this protein is Homoserine O-succinyltransferase.